The chain runs to 144 residues: uncharacterized protein (144 aa).

Residues 1–16 (MRKFLIVLLLPLLVLA) form the signal peptide.

This is an uncharacterized protein from Aquifex aeolicus (strain VF5).